The following is a 368-amino-acid chain: Isopentenyl-diphosphate delta-isomerase (368 aa).

7–8 contacts substrate; sequence RK. FMN is bound by residues Thr-65, 66–68, Ser-96, and Asn-125; that span reads GMT. 96–98 is a substrate binding site; the sequence is SQR. Residue Gln-160 coordinates substrate. Mg(2+) is bound at residue Glu-161. FMN-binding positions include Lys-193, Ser-218, Thr-223, 275 to 277, and 296 to 297; these read GIR and AL.

This sequence belongs to the IPP isomerase type 2 family. Homooctamer. Dimer of tetramers. FMN is required as a cofactor. It depends on NADPH as a cofactor. The cofactor is Mg(2+).

The protein localises to the cytoplasm. The catalysed reaction is isopentenyl diphosphate = dimethylallyl diphosphate. In terms of biological role, involved in the biosynthesis of isoprenoids. Catalyzes the 1,3-allylic rearrangement of the homoallylic substrate isopentenyl (IPP) to its allylic isomer, dimethylallyl diphosphate (DMAPP). The sequence is that of Isopentenyl-diphosphate delta-isomerase from Saccharolobus islandicus (strain L.S.2.15 / Lassen #1) (Sulfolobus islandicus).